The sequence spans 216 residues: UPF0598 protein C8orf82 (216 aa).

The protein belongs to the UPF0598 family.

In Homo sapiens (Human), this protein is UPF0598 protein C8orf82 (C8orf82).